A 130-amino-acid polypeptide reads, in one-letter code: Small ribosomal subunit protein uS9 (130 aa).

Belongs to the universal ribosomal protein uS9 family.

This is Small ribosomal subunit protein uS9 from Leptothrix cholodnii (strain ATCC 51168 / LMG 8142 / SP-6) (Leptothrix discophora (strain SP-6)).